The sequence spans 524 residues: MSRQFTCKSGASNRGFSGCSAVLSGGSSSSYRAGGKGLSGGFGSRSLYSLGGGRSITLNMASGSGKNGGFGFGRNRASGFAGSIFGSVALGPVCPAVCPPGGIHQVTVNESLLAPLNVELDPEIQKVRAQEREQIKALNNKFASFIDKVRFLEQQNQVLQTKWELLQQLDLNNCKNNLEPILEGHISNMRKQLETLSGDRVRLDSELRNVRDVVEDYKKKYEEEINRRTAAENEFVLLKKDVDAAYANKVELQAKVDTMDQDIKFFKCLFEAEMAQIQSHISDMSVILSMDNNRNLDLDSIIDEVRAQYEEIALKSKAEAEALYQTKFQELQLAAGRHGDDLKNTKNEITELTRFIQRLRSEIENAKKQASNLETAIADAEQRGDSALKDARAKLDELEGALHQAKEELARMLREYQELMSLKLALDMEIATYRKLLESEECRMSGEYSSPVSISIISSTSGSGGYGFRPSTVSGGYVANSTSCISGVCSVRGGENRSRGSASDYKDTLTKGSSLSTPSKKGGR.

The interval 1–130 (MSRQFTCKSG…DPEIQKVRAQ (130 aa)) is head. The segment at 131 to 166 (EREQIKALNNKFASFIDKVRFLEQQNQVLQTKWELL) is coil 1A. Residues 131–444 (EREQIKALNN…KLLESEECRM (314 aa)) enclose the IF rod domain. The linker 1 stretch occupies residues 167 to 185 (QQLDLNNCKNNLEPILEGH). Residues 186-277 (ISNMRKQLET…CLFEAEMAQI (92 aa)) form a coil 1B region. Residues 278–301 (QSHISDMSVILSMDNNRNLDLDSI) are linker 12. The tract at residues 302–440 (IDEVRAQYEE…ATYRKLLESE (139 aa)) is coil 2. The interval 441 to 524 (ECRMSGEYSS…LSTPSKKGGR (84 aa)) is tail. The segment at 493-524 (GGENRSRGSASDYKDTLTKGSSLSTPSKKGGR) is disordered. Over residues 494–509 (GENRSRGSASDYKDTL) the composition is skewed to basic and acidic residues. The segment covering 510 to 524 (TKGSSLSTPSKKGGR) has biased composition (polar residues).

It belongs to the intermediate filament family. Heterodimer of a type I and a type II keratin. Associates with KRT16 and/or KRT17. In terms of tissue distribution, specifically expressed in the inner root sheath (IRS) of the hair follicle. Present in Henle and the Huxley layers of the IRS, while expression in the cuticle is unsure (at protein level).

The protein resides in the cytoplasm. It is found in the cytoskeleton. Plays a central role in hair formation. Essential component of keratin intermediate filaments in the inner root sheath (IRS) of the hair follicle. The chain is Keratin, type II cytoskeletal 71 (Krt71) from Mus musculus (Mouse).